A 33-amino-acid chain; its full sequence is Mu-theraphotoxin-Osp1b (33 aa).

3 disulfide bridges follow: Cys2–Cys17, Cys9–Cys22, and Cys16–Cys29.

Belongs to the neurotoxin 10 (Hwtx-1) family. 22 (Htx-4) subfamily. Expressed by the venom gland.

The protein localises to the secreted. Functionally, voltage-gated sodium channel Nav1.7/SCN9A inhibitor. This chain is Mu-theraphotoxin-Osp1b, found in Orphnaecus sp. (strain Maanghit-Cave/Philippines) (Tarantula spider).